The primary structure comprises 938 residues: Isoleucine--tRNA ligase (938 aa).

Positions 58–68 match the 'HIGH' region motif; it reads PYANGNIHIGH. E561 is a binding site for L-isoleucyl-5'-AMP. The short motif at 602 to 606 is the 'KMSKS' region element; that stretch reads KMSKS. ATP is bound at residue K605. Zn(2+) is bound by residues C901, C904, C921, and C924.

Belongs to the class-I aminoacyl-tRNA synthetase family. IleS type 1 subfamily. As to quaternary structure, monomer. It depends on Zn(2+) as a cofactor.

The protein localises to the cytoplasm. The catalysed reaction is tRNA(Ile) + L-isoleucine + ATP = L-isoleucyl-tRNA(Ile) + AMP + diphosphate. Functionally, catalyzes the attachment of isoleucine to tRNA(Ile). As IleRS can inadvertently accommodate and process structurally similar amino acids such as valine, to avoid such errors it has two additional distinct tRNA(Ile)-dependent editing activities. One activity is designated as 'pretransfer' editing and involves the hydrolysis of activated Val-AMP. The other activity is designated 'posttransfer' editing and involves deacylation of mischarged Val-tRNA(Ile). The protein is Isoleucine--tRNA ligase of Yersinia pestis bv. Antiqua (strain Angola).